The primary structure comprises 348 residues: MITRRQSTEIRLGNLTIGGSAPISVQSMTKTDTRNIPATIAQIKELEECGCEIIRLAIPDMEAASALKSIRPKVKIPIVADIHFDYRLALASLSAGVDGLRLNPGNIGDPERVKAVVKSAKEREIPIRIGVNAGSLPKDLPPELTIAQKMVKAAMGHIKILEGLDFGLIKVSLKAFDVPTTIEAYTQIASLIPYPLHVGITETGTPKTGLVRSAVGIGNLLYMGIGDTIRVSLTAPPQEEVFAAYEILKSLNLRQRGPILVSCPTCSRTEVDIVGIASRVQEALNKIDKPIRVAVMGCAVNGPGESKEADLGIACGKGQGLLFRKGEKIAVVPEDELVDALLREIASL.

[4Fe-4S] cluster contacts are provided by Cys-263, Cys-266, Cys-298, and Glu-305.

The protein belongs to the IspG family. [4Fe-4S] cluster serves as cofactor.

The enzyme catalyses (2E)-4-hydroxy-3-methylbut-2-enyl diphosphate + oxidized [flavodoxin] + H2O + 2 H(+) = 2-C-methyl-D-erythritol 2,4-cyclic diphosphate + reduced [flavodoxin]. Its pathway is isoprenoid biosynthesis; isopentenyl diphosphate biosynthesis via DXP pathway; isopentenyl diphosphate from 1-deoxy-D-xylulose 5-phosphate: step 5/6. Its function is as follows. Converts 2C-methyl-D-erythritol 2,4-cyclodiphosphate (ME-2,4cPP) into 1-hydroxy-2-methyl-2-(E)-butenyl 4-diphosphate. The chain is 4-hydroxy-3-methylbut-2-en-1-yl diphosphate synthase (flavodoxin) from Dehalococcoides mccartyi (strain CBDB1).